Consider the following 394-residue polypeptide: SVGFKAGVKDYRLTYYTPDYETLATDILAAFRVTPQPGVPPEEAGAAVAAESSTGTWTTVWTDGLTSLDRYKGRCYHIEPVAGEENQYIAYVAYPLDLFEEGSVTNMFTSIVGNVFGFKALRALRLEDLRIPPAYSKTFQGPPHGIQVERDKLNKYGRPLLGCTIKPKLGLSAKNYGRAVYECLRGGLDFTKDDENVNSQPFMRWRDRFLFCAEAIYKAQAETGEIKGHYLNATAGTSEEMIKRAVCARELGVPIVMHDYLTGGFTANTSLAHYCRDNGLLLHIHRAMHAVIDRQRNHGIHFRVLAKALRMSGGDHIHSGTVVGKLEGERDVTLGFVDLLRDDFIEKDRSRGIYFTQDWVSMPGVLPVASGGIHVWHMPALTDIFGDDSVLQFG.

Lysine 5 carries the N6,N6,N6-trimethyllysine modification. Residues asparagine 114 and threonine 164 each contribute to the substrate site. Residue lysine 166 is the Proton acceptor of the active site. Lysine 168 lines the substrate pocket. Mg(2+)-binding residues include lysine 192, aspartate 194, and glutamate 195. Lysine 192 carries the N6-carboxylysine modification. Histidine 285 serves as the catalytic Proton acceptor. Substrate contacts are provided by arginine 286, histidine 318, and serine 370.

It belongs to the RuBisCO large chain family. Type I subfamily. As to quaternary structure, heterohexadecamer of 8 large chains and 8 small chains. It depends on Mg(2+) as a cofactor.

Its subcellular location is the plastid. The protein resides in the chloroplast. It catalyses the reaction 2 (2R)-3-phosphoglycerate + 2 H(+) = D-ribulose 1,5-bisphosphate + CO2 + H2O. It carries out the reaction D-ribulose 1,5-bisphosphate + O2 = 2-phosphoglycolate + (2R)-3-phosphoglycerate + 2 H(+). Its function is as follows. RuBisCO catalyzes two reactions: the carboxylation of D-ribulose 1,5-bisphosphate, the primary event in carbon dioxide fixation, as well as the oxidative fragmentation of the pentose substrate in the photorespiration process. Both reactions occur simultaneously and in competition at the same active site. The polypeptide is Ribulose bisphosphate carboxylase large chain (rbcL) (Barclaya longifolia (Orchid lily)).